Reading from the N-terminus, the 437-residue chain is tRNA-2-methylthio-N(6)-dimethylallyladenosine synthase (437 aa).

The 115-residue stretch at 1–115 (MKVYIETMGC…ISQVIHKEKA (115 aa)) folds into the MTTase N-terminal domain. 6 residues coordinate [4Fe-4S] cluster: cysteine 10, cysteine 46, cysteine 78, cysteine 148, cysteine 152, and cysteine 155. Positions 134–367 (KKAQIRSLLN…QNRHKEILEE (234 aa)) constitute a Radical SAM core domain. The TRAM domain maps to 370 to 436 (KLEVGKTHVV…KGRLMAATKG (67 aa)).

This sequence belongs to the methylthiotransferase family. MiaB subfamily. In terms of assembly, monomer. [4Fe-4S] cluster serves as cofactor.

It localises to the cytoplasm. The catalysed reaction is N(6)-dimethylallyladenosine(37) in tRNA + (sulfur carrier)-SH + AH2 + 2 S-adenosyl-L-methionine = 2-methylsulfanyl-N(6)-dimethylallyladenosine(37) in tRNA + (sulfur carrier)-H + 5'-deoxyadenosine + L-methionine + A + S-adenosyl-L-homocysteine + 2 H(+). In terms of biological role, catalyzes the methylthiolation of N6-(dimethylallyl)adenosine (i(6)A), leading to the formation of 2-methylthio-N6-(dimethylallyl)adenosine (ms(2)i(6)A) at position 37 in tRNAs that read codons beginning with uridine. The sequence is that of tRNA-2-methylthio-N(6)-dimethylallyladenosine synthase from Helicobacter pylori (strain ATCC 700392 / 26695) (Campylobacter pylori).